A 708-amino-acid polypeptide reads, in one-letter code: ARF GTPase-activating protein GIT2 (708 aa).

The Arf-GAP domain occupies 1–124; the sequence is MSKRLRSSDV…AFVHRLPCRE (124 aa). The segment at 11-34 adopts a C4-type zinc-finger fold; it reads CADCNGPDPSWASVNRGTFICDEC. ANK repeat units follow at residues 132–161, 166–195, and 199–228; these read DLSK…QANF, KGST…DPGT, and SGKT…ELTD. The tract at residues 376-592 is disordered; that stretch reads STQHSTESQD…SPTLPSTEDV (217 aa). Residues 384 to 401 show a composition bias toward acidic residues; the sequence is QDNDQPDYDSVASDEDTD. Phosphoserine occurs at positions 393 and 396. Threonine 400 carries the post-translational modification Phosphothreonine. The span at 407 to 438 shows a compositional bias: polar residues; the sequence is SKANRQKLQTLQSENSSLRRQATASACQVQTG. Over residues 504 to 518 the composition is skewed to low complexity; sequence TSSSSLPSFPSTLSW. A phosphoserine mark is found at serine 508, serine 511, and serine 519. Residues 519-532 are compositionally biased toward basic and acidic residues; it reads SRDESARRASRLEK. Threonine 536 carries the phosphothreonine modification. At serine 563 the chain carries Phosphoserine.

As to quaternary structure, may form heterooligomers with GIT1. Directly interacts with protein Piccolo/PCLO. Interacts with PPFIA1 and PPFIA2. Interacts with ARHGEF7. Identified in a complex with ARHGEF6 and BIN2. Interacts with PAK3. Interacts with PXN/paxillin. Interacts with TGFB1I1. Forms a complex with EFNB1 and GRB4/NCK2. Tyrosine phosphorylated when coexpressed in cells with PTK2/FAK1 and SRC. As to expression, expressed in the brain (at protein level).

Its function is as follows. GTPase-activating protein for ADP ribosylation factor family members, including ARF1. The sequence is that of ARF GTPase-activating protein GIT2 (Git2) from Mus musculus (Mouse).